We begin with the raw amino-acid sequence, 1352 residues long: Alpha-protein kinase 1 (1352 aa).

The Arf-GAP domain occupies 7-127 (DPNYGLLRSL…RWTSSLSTSD (121 aa)). The C4-type zinc finger occupies 25 to 48 (CAECNSANVPYVCIKLGVFICPTC). Disordered stretches follow at residues 123–164 (LSTS…NNNN), 219–380 (TQSQ…PQHH), 424–445 (QQQQ…NSEP), 457–484 (HNHH…GNNS), 503–560 (FVEE…GGVS), and 619–658 (IINN…TNQN). The span at 237-246 (GFSPFNSPRS) shows a compositional bias: polar residues. 2 stretches are compositionally biased toward low complexity: residues 268 to 287 (NNSN…NNGN) and 298 to 318 (NNNN…NNNN). Composition is skewed to polar residues over residues 329-352 (KTFS…SGNS) and 359-379 (HPTQ…SPQH). A coiled-coil region spans residues 393–429 (TTQQQLQQQQLQLQQQLQQQLQQQQQQQQQQQQQQQS). Basic residues-rich tracts occupy residues 458-470 (NHHH…HHKQ) and 510-523 (HQHP…RHHS). Positions 619-636 (IINNQNNQNNNNNNNTNN) are enriched in low complexity. A coiled-coil region spans residues 689–781 (YIQQQQQQQQ…QQQQQQHINL (93 aa)). 2 disordered regions span residues 786–863 (PLQS…TDED) and 901–979 (TSPI…PDAR). Residues 799-812 (PQHSSSQYMNQQGY) are compositionally biased toward polar residues. Over residues 821-859 (QPQSPQQIQPQPLQQQIFQQVQQQQPQIPQQSPQPLQSS) the composition is skewed to low complexity. Pro residues predominate over residues 906–915 (QQPPQPPQPV). A compositionally biased stretch (low complexity) spans 931 to 965 (QQQNGPTVPQQQQQQQQQQQQQQQQQQQQQQQQQP). The 205-residue stretch at 990–1194 (RFDAKLGKWV…ICHYLGLSSV (205 aa)) folds into the Alpha-type protein kinase domain. ATP is bound at residue 1164–1169 (GKGNLG). Disordered regions lie at residues 1198–1234 (PAND…SFNF) and 1279–1352 (QQQQ…KLVS). Residues 1241–1320 (HVLEQLNQQQ…QQQQQQQQNG (80 aa)) adopt a coiled-coil conformation. The span at 1279-1319 (QQQQQQQQQQQQQQQQNQQQNQQQNQQQQQQQQQQQQQQQN) shows a compositional bias: low complexity. Pro residues predominate over residues 1321-1332 (HPPPQTPLPPTP). A compositionally biased stretch (basic and acidic residues) spans 1334–1352 (QKDKPKIEVFGDILRKLVS).

Belongs to the protein kinase superfamily. Alpha-type protein kinase family. ALPK subfamily.

The protein is Alpha-protein kinase 1 (ak1) of Dictyostelium discoideum (Social amoeba).